Consider the following 294-residue polypeptide: Homeobox protein Nkx-2.5 (294 aa).

Disordered regions lie at residues 48–69 (GSEP…PAAF) and 102–122 (EQEK…RRKP). Residues 52–69 (PALPELPEPPPAKPPAAF) show a composition bias toward pro residues. Positions 102-114 (EQEKRELEDPERP) are enriched in basic and acidic residues. The segment at residues 119–178 (RRKPRVLFSQAQVYELERRFKQQKYLSAPERDHLANVLKLTSTQVKIWFQNRRYKCKRQR) is a DNA-binding region (homeobox).

This sequence belongs to the NK-2 homeobox family. In terms of assembly, homodimer (via the homeobox); binds DNA as homodimer.

The protein localises to the nucleus. Its function is as follows. Transcription factor required for the development of the heart and the spleen. Implicated in commitment to and/or differentiation of the myocardial lineage. Binds to the core DNA motif of promoter. The protein is Homeobox protein Nkx-2.5 (NKX-2.5) of Gallus gallus (Chicken).